The following is a 161-amino-acid chain: Phosphopantetheine adenylyltransferase (161 aa).

Threonine 9 provides a ligand contact to substrate. Residues 9 to 10 (TF) and histidine 17 contribute to the ATP site. The substrate site is built by lysine 41, leucine 73, and arginine 87. Residues 88-90 (GLR), glutamate 98, and 123-129 (YSFISST) contribute to the ATP site.

The protein belongs to the bacterial CoaD family. Homohexamer. It depends on Mg(2+) as a cofactor.

It is found in the cytoplasm. It carries out the reaction (R)-4'-phosphopantetheine + ATP + H(+) = 3'-dephospho-CoA + diphosphate. It participates in cofactor biosynthesis; coenzyme A biosynthesis; CoA from (R)-pantothenate: step 4/5. Functionally, reversibly transfers an adenylyl group from ATP to 4'-phosphopantetheine, yielding dephospho-CoA (dPCoA) and pyrophosphate. The sequence is that of Phosphopantetheine adenylyltransferase from Pseudomonas putida (strain ATCC 47054 / DSM 6125 / CFBP 8728 / NCIMB 11950 / KT2440).